Here is a 380-residue protein sequence, read N- to C-terminus: Homeobox protein ceh-6 (380 aa).

Over residues 1-25 (MLIPSSSSIPSSLSASASDSEPSSL) the composition is skewed to low complexity. Disordered stretches follow at residues 1 to 31 (MLIP…SGIS), 167 to 190 (SGSV…SEQT), and 265 to 286 (GSPN…KKRT). Residues 187 to 261 (SEQTCPDDLE…LLFKWLEEAD (75 aa)) enclose the POU-specific domain. Positions 281–340 (KRKKRTSIEVNVKSRLEFHFQSNQKPNAQEITQVAMELQLEKEVVRVWFCNRRQKEKRIA) form a DNA-binding region, homeobox.

It belongs to the POU transcription factor family. Class-3 subfamily. As to quaternary structure, interacts with egl-27, sox-2 and sem-4. Interacts with wdr-5.1. As to expression, expressed in a series of neurons in the ring ganglia, excretory cell, dividing neuroblasts in the ventral cord and rectal cells.

It is found in the nucleus. Its function is as follows. Vital for embryonic development and essential for the proper function of the excretory cell. Required for the transdifferentiation of the Y rectal epithelial cell to the PDA motor neuron during larval development. This Caenorhabditis elegans protein is Homeobox protein ceh-6.